The following is a 597-amino-acid chain: MSTQYETQGYTINNAGRRLVVDPITRIEGHMRCEVNINDQNVITNAVSCGTMFRGLEIILQGRDPRDAWAFVERICGVCTGVHALASVYAIEDAIGIKVPDNANIIRNIMLATLWCHDHLVHFYQLAGMDWIDVLDALKADPRKTSELAQSLSSWPKSSPGYFFDVQNRLKKFVEGGQLGIFRNGYWGHPQYKLPPEANLMGFAHYLEALDFQREIVKIHAVFGGKNPHPNWIVGGMPCAINIDESGAVGAVNMERLNLVQSIITRTADFINNVMIPDALAIGQFNKPWSEIGTGLSDKCVLSYGAFPDIANDFGEKSLLMPGGAVINGDFNNVLPVDLVDPQQVQEFVDHAWYRYPNDQVGRHPFDGITDPWYNPGDVKGSDTNIQQLNEQERYSWIKAPRWRGNAMEVGPLARTLIAYHKGDAATVESVDRMMSALNLPLSGIQSTLGRILCRAHEAQWAAGKLQYFFDKLMTNLKNGNLATASTEKWEPATWPTECRGVGFTEAPRGALGHWAAIRDGKIDLYQCVVPTTWNASPRDPKGQIGAYEAALMNTKMAIPEQPLEILRTLHSFDPCLACSTHVLGDDGSELISVQVR.

Cys-76, Cys-79, Cys-576, and Cys-579 together coordinate Ni(2+).

This sequence belongs to the [NiFe]/[NiFeSe] hydrogenase large subunit family. In terms of assembly, heterodimer of a large and a small subunit. The cofactor is Ni(2+).

It localises to the cell membrane. It catalyses the reaction H2 + A = AH2. Its function is as follows. This is one of three E.coli hydrogenases synthesized in response to different physiological conditions. HYD1 is believed to have a role in hydrogen cycling during fermentative growth. This is Hydrogenase-1 large chain (hyaB) from Escherichia coli (strain K12).